A 444-amino-acid polypeptide reads, in one-letter code: Gustatory receptor 5a for trehalose (444 aa).

Topologically, residues 1-56 (MRQLKGRNRCNRAVRHLKIQGKMWLKNLKSGLEQIRESQVRGTRKNFLHDGSFHEA) are cytoplasmic. Residues 57-77 (VAPVLAVAQCFCLMPVCGISA) form a helical membrane-spanning segment. The Extracellular segment spans residues 78–178 (PTYRGLSFNR…RARPARRLKL (101 aa)). Residues 179–199 (VAFVLLVVSLMEHLLSIISVV) form a helical membrane-spanning segment. Topologically, residues 200-214 (YYDFCPRRSDPVESY) are cytoplasmic. A helical transmembrane segment spans residues 215–235 (LLGASAQLFEVFPYSNWLAWL). Topologically, residues 236-240 (GKIQN) are extracellular. Residues 241 to 261 (VLLTFGWSYMDIFLMMLGMGL) traverse the membrane as a helical segment. Topologically, residues 262–305 (SEMLARLNRSLEQQVRQPMPEAYWTWSRTLYRSIVELIREVDDA) are cytoplasmic. The helical transmembrane segment at 306 to 326 (VSGIMLISFGSNLYFICLQLL) threads the bilayer. The Extracellular segment spans residues 327–338 (KSINTMPSSAHA). The helical transmembrane segment at 339-359 (VYFYFSLLFLLSRSTAVLLFV) threads the bilayer. The Cytoplasmic segment spans residues 360–410 (SAINDQAREPLRLLRLVPLKGYHPEVFRFAAELASDQVALTGLKFFNVTRK). Residues 411–431 (LFLAMAGTVATYELVLIQFHE) form a helical membrane-spanning segment. The Extracellular segment spans residues 432-444 (DKKTWDCSPFNLD).

The protein belongs to the insect chemoreceptor superfamily. Gustatory receptor (GR) family. Gr5a subfamily. As to expression, expressed in labellar chemosensory neurons.

Its subcellular location is the cell membrane. Gustatory receptor required for response to the sugar trehalose in taste neurons. Gr5a neurons selectively respond to sugars, in contrast to Gr66a cells which respond to bitter compounds. Flies are attracted to sugars and avoid bitter substances, suggesting that Gr5a neuron activity is sufficient to mediate acceptance behavior. Sugar signal transduction occurs through coupling with G-proteins such as Galpha49B and G-salpha60A. This Drosophila melanogaster (Fruit fly) protein is Gustatory receptor 5a for trehalose (Gr5a).